Consider the following 228-residue polypeptide: 2,3-bisphosphoglycerate-dependent phosphoglycerate mutase (228 aa).

Substrate-binding positions include 8–15, 21–22, R60, 87–90, K98, 114–115, and 180–181; these read RHGQSQWN, TG, ERHY, RR, and GN. H9 functions as the Tele-phosphohistidine intermediate in the catalytic mechanism. The Proton donor/acceptor role is filled by E87.

This sequence belongs to the phosphoglycerate mutase family. BPG-dependent PGAM subfamily. Homodimer.

The catalysed reaction is (2R)-2-phosphoglycerate = (2R)-3-phosphoglycerate. The protein operates within carbohydrate degradation; glycolysis; pyruvate from D-glyceraldehyde 3-phosphate: step 3/5. In terms of biological role, catalyzes the interconversion of 2-phosphoglycerate and 3-phosphoglycerate. This Novosphingobium aromaticivorans (strain ATCC 700278 / DSM 12444 / CCUG 56034 / CIP 105152 / NBRC 16084 / F199) protein is 2,3-bisphosphoglycerate-dependent phosphoglycerate mutase.